The primary structure comprises 505 residues: tRNA-2-methylthio-N(6)-dimethylallyladenosine synthase (505 aa).

The interval 1–39 (MGQKAKAQAPTTHPRPHTLSSQVAPALPRRPRHAAPESL) is disordered. One can recognise an MTTase N-terminal domain in the interval 47–162 (MKAHLITYGC…IGAALESNER (116 aa)). [4Fe-4S] cluster-binding residues include Cys-56, Cys-92, Cys-125, Cys-194, Cys-198, and Cys-201. A Radical SAM core domain is found at 180-413 (PSGKLQAHLT…IARQKDWSAR (234 aa)). Residues 416–479 (AQKVGTVQQV…PHMMYGHILG (64 aa)) enclose the TRAM domain.

It belongs to the methylthiotransferase family. MiaB subfamily. As to quaternary structure, monomer. Requires [4Fe-4S] cluster as cofactor.

It localises to the cytoplasm. It carries out the reaction N(6)-dimethylallyladenosine(37) in tRNA + (sulfur carrier)-SH + AH2 + 2 S-adenosyl-L-methionine = 2-methylsulfanyl-N(6)-dimethylallyladenosine(37) in tRNA + (sulfur carrier)-H + 5'-deoxyadenosine + L-methionine + A + S-adenosyl-L-homocysteine + 2 H(+). Functionally, catalyzes the methylthiolation of N6-(dimethylallyl)adenosine (i(6)A), leading to the formation of 2-methylthio-N6-(dimethylallyl)adenosine (ms(2)i(6)A) at position 37 in tRNAs that read codons beginning with uridine. The chain is tRNA-2-methylthio-N(6)-dimethylallyladenosine synthase from Deinococcus radiodurans (strain ATCC 13939 / DSM 20539 / JCM 16871 / CCUG 27074 / LMG 4051 / NBRC 15346 / NCIMB 9279 / VKM B-1422 / R1).